Reading from the N-terminus, the 121-residue chain is Small ribosomal subunit protein uS13 (121 aa).

A disordered region spans residues 94-121 (GLPVRGQNTKNNSRTRKGPRRTVANKKK). A compositionally biased stretch (basic residues) spans 106–121 (SRTRKGPRRTVANKKK).

It belongs to the universal ribosomal protein uS13 family. As to quaternary structure, part of the 30S ribosomal subunit. Forms a loose heterodimer with protein S19. Forms two bridges to the 50S subunit in the 70S ribosome.

Functionally, located at the top of the head of the 30S subunit, it contacts several helices of the 16S rRNA. In the 70S ribosome it contacts the 23S rRNA (bridge B1a) and protein L5 of the 50S subunit (bridge B1b), connecting the 2 subunits; these bridges are implicated in subunit movement. Contacts the tRNAs in the A and P-sites. The polypeptide is Small ribosomal subunit protein uS13 (Halalkalibacterium halodurans (strain ATCC BAA-125 / DSM 18197 / FERM 7344 / JCM 9153 / C-125) (Bacillus halodurans)).